Reading from the N-terminus, the 115-residue chain is Peptidyl-tRNA hydrolase (115 aa).

This sequence belongs to the PTH2 family.

It is found in the cytoplasm. It catalyses the reaction an N-acyl-L-alpha-aminoacyl-tRNA + H2O = an N-acyl-L-amino acid + a tRNA + H(+). Its function is as follows. The natural substrate for this enzyme may be peptidyl-tRNAs which drop off the ribosome during protein synthesis. The sequence is that of Peptidyl-tRNA hydrolase (pth) from Nanoarchaeum equitans (strain Kin4-M).